Here is a 264-residue protein sequence, read N- to C-terminus: Thiazole synthase (264 aa).

The Schiff-base intermediate with DXP role is filled by Lys106. Residues Gly167, 193–194 (AG), and 215–216 (NS) each bind 1-deoxy-D-xylulose 5-phosphate.

This sequence belongs to the ThiG family. Homotetramer. Forms heterodimers with either ThiH or ThiS.

Its subcellular location is the cytoplasm. The enzyme catalyses [ThiS sulfur-carrier protein]-C-terminal-Gly-aminoethanethioate + 2-iminoacetate + 1-deoxy-D-xylulose 5-phosphate = [ThiS sulfur-carrier protein]-C-terminal Gly-Gly + 2-[(2R,5Z)-2-carboxy-4-methylthiazol-5(2H)-ylidene]ethyl phosphate + 2 H2O + H(+). It functions in the pathway cofactor biosynthesis; thiamine diphosphate biosynthesis. Its function is as follows. Catalyzes the rearrangement of 1-deoxy-D-xylulose 5-phosphate (DXP) to produce the thiazole phosphate moiety of thiamine. Sulfur is provided by the thiocarboxylate moiety of the carrier protein ThiS. In vitro, sulfur can be provided by H(2)S. The polypeptide is Thiazole synthase (Prochlorococcus marinus (strain AS9601)).